A 270-amino-acid polypeptide reads, in one-letter code: Glutamate racemase (270 aa).

Substrate contacts are provided by residues 14 to 15 (DS) and 46 to 47 (YG). C77 acts as the Proton donor/acceptor in catalysis. 78-79 (NT) serves as a coordination point for substrate. C186 acts as the Proton donor/acceptor in catalysis. 187-188 (TH) lines the substrate pocket.

This sequence belongs to the aspartate/glutamate racemases family.

It catalyses the reaction L-glutamate = D-glutamate. It functions in the pathway cell wall biogenesis; peptidoglycan biosynthesis. Functionally, provides the (R)-glutamate required for cell wall biosynthesis. In Trichodesmium erythraeum (strain IMS101), this protein is Glutamate racemase.